A 96-amino-acid chain; its full sequence is Aspartyl/glutamyl-tRNA(Asn/Gln) amidotransferase subunit C (96 aa).

This sequence belongs to the GatC family. As to quaternary structure, heterotrimer of A, B and C subunits.

It catalyses the reaction L-glutamyl-tRNA(Gln) + L-glutamine + ATP + H2O = L-glutaminyl-tRNA(Gln) + L-glutamate + ADP + phosphate + H(+). The enzyme catalyses L-aspartyl-tRNA(Asn) + L-glutamine + ATP + H2O = L-asparaginyl-tRNA(Asn) + L-glutamate + ADP + phosphate + 2 H(+). Functionally, allows the formation of correctly charged Asn-tRNA(Asn) or Gln-tRNA(Gln) through the transamidation of misacylated Asp-tRNA(Asn) or Glu-tRNA(Gln) in organisms which lack either or both of asparaginyl-tRNA or glutaminyl-tRNA synthetases. The reaction takes place in the presence of glutamine and ATP through an activated phospho-Asp-tRNA(Asn) or phospho-Glu-tRNA(Gln). The chain is Aspartyl/glutamyl-tRNA(Asn/Gln) amidotransferase subunit C from Deinococcus deserti (strain DSM 17065 / CIP 109153 / LMG 22923 / VCD115).